We begin with the raw amino-acid sequence, 337 residues long: AP2/ERF and B3 domain-containing transcription factor At1g50680 (337 aa).

The segment at residues Lys27 to Pro84 is a DNA-binding region (AP2/ERF). Positions Phe157–Asn271 form a DNA-binding region, TF-B3.

The protein belongs to the AP2/ERF transcription factor family. RAV subfamily.

It localises to the nucleus. In terms of biological role, probably acts as a transcriptional activator. Binds to the GCC-box pathogenesis-related promoter element. May be involved in the regulation of gene expression by stress factors and by components of stress signal transduction pathways. In Arabidopsis thaliana (Mouse-ear cress), this protein is AP2/ERF and B3 domain-containing transcription factor At1g50680.